A 266-amino-acid chain; its full sequence is 4-hydroxy-tetrahydrodipicolinate reductase (266 aa).

10 to 15 (GPRGRM) lines the NAD(+) pocket. Lysine 38 lines the NADP(+) pocket. NAD(+)-binding positions include 99-101 (GTT) and 125-128 (APNF). Histidine 155 acts as the Proton donor/acceptor in catalysis. Histidine 156 is a (S)-2,3,4,5-tetrahydrodipicolinate binding site. The active-site Proton donor is the lysine 159. Position 165 to 166 (165 to 166 (GT)) interacts with (S)-2,3,4,5-tetrahydrodipicolinate.

It belongs to the DapB family.

Its subcellular location is the cytoplasm. It carries out the reaction (S)-2,3,4,5-tetrahydrodipicolinate + NAD(+) + H2O = (2S,4S)-4-hydroxy-2,3,4,5-tetrahydrodipicolinate + NADH + H(+). The catalysed reaction is (S)-2,3,4,5-tetrahydrodipicolinate + NADP(+) + H2O = (2S,4S)-4-hydroxy-2,3,4,5-tetrahydrodipicolinate + NADPH + H(+). It participates in amino-acid biosynthesis; L-lysine biosynthesis via DAP pathway; (S)-tetrahydrodipicolinate from L-aspartate: step 4/4. Catalyzes the conversion of 4-hydroxy-tetrahydrodipicolinate (HTPA) to tetrahydrodipicolinate. The chain is 4-hydroxy-tetrahydrodipicolinate reductase from Bacillus cereus (strain ATCC 14579 / DSM 31 / CCUG 7414 / JCM 2152 / NBRC 15305 / NCIMB 9373 / NCTC 2599 / NRRL B-3711).